The chain runs to 138 residues: Phosphoribosyl-AMP cyclohydrolase (138 aa).

Mg(2+) is bound at residue aspartate 84. Cysteine 85 provides a ligand contact to Zn(2+). Residues aspartate 86 and aspartate 88 each contribute to the Mg(2+) site. The Zn(2+) site is built by cysteine 102 and cysteine 109.

The protein belongs to the PRA-CH family. Homodimer. Mg(2+) serves as cofactor. The cofactor is Zn(2+).

It localises to the cytoplasm. It catalyses the reaction 1-(5-phospho-beta-D-ribosyl)-5'-AMP + H2O = 1-(5-phospho-beta-D-ribosyl)-5-[(5-phospho-beta-D-ribosylamino)methylideneamino]imidazole-4-carboxamide. It functions in the pathway amino-acid biosynthesis; L-histidine biosynthesis; L-histidine from 5-phospho-alpha-D-ribose 1-diphosphate: step 3/9. Its function is as follows. Catalyzes the hydrolysis of the adenine ring of phosphoribosyl-AMP. The polypeptide is Phosphoribosyl-AMP cyclohydrolase (Burkholderia pseudomallei (strain K96243)).